The following is a 1394-amino-acid chain: DNA-directed RNA polymerase subunit beta' (1394 aa).

Zn(2+) contacts are provided by Cys70, Cys72, Cys85, and Cys88. Asp470, Asp472, and Asp474 together coordinate Mg(2+). Zn(2+)-binding residues include Cys815, Cys889, Cys896, and Cys899.

It belongs to the RNA polymerase beta' chain family. The RNAP catalytic core consists of 2 alpha, 1 beta, 1 beta' and 1 omega subunit. When a sigma factor is associated with the core the holoenzyme is formed, which can initiate transcription. The cofactor is Mg(2+). Zn(2+) is required as a cofactor.

It catalyses the reaction RNA(n) + a ribonucleoside 5'-triphosphate = RNA(n+1) + diphosphate. DNA-dependent RNA polymerase catalyzes the transcription of DNA into RNA using the four ribonucleoside triphosphates as substrates. This is DNA-directed RNA polymerase subunit beta' from Anaeromyxobacter dehalogenans (strain 2CP-C).